The chain runs to 1088 residues: DEAD-box ATP-dependent RNA helicase 40 (1088 aa).

3 disordered regions span residues 1–28 (MATTEDTPASAGPRYAPEDPTLPQPWKG), 47–178 (TQYE…QYAH), and 192–254 (TQGL…QNTH). Position 2 is an N-acetylalanine (A2). The region spanning 20–54 (PTLPQPWKGLIDGSTGILYYWNPETNVTQYERPSA) is the WW domain. 3 stretches are compositionally biased toward low complexity: residues 87–137 (VGHV…SQSM), 148–171 (QTYQPTTQQQQQGMQNQHSQMPQQ), and 200–215 (QTPQGGPHGQQFPSQQ). Positions 222–231 (PKREGDEFHG) are enriched in basic and acidic residues. Residues 236–254 (GFSQPHLPNSERSPSQNTH) are compositionally biased toward polar residues. The short motif at 435-463 (ITFESSGLPPEILRELLSAGFPSPTPIQA) is the Q motif element. One can recognise a Helicase ATP-binding domain in the interval 466–640 (WPIALQSRDI…SDLLVNPVQV (175 aa)). Residue 479-486 (AKTGSGKT) coordinates ATP. The short motif at 588–591 (DEAD) is the DEAD box element. The Helicase C-terminal domain occupies 669–813 (RLEQILRSQE…QVPPQVRDIA (145 aa)). 4 stretches are compositionally biased toward gly residues: residues 861–885 (EGGFGGREGGFGGREGGFGGRGGRF), 893–902 (GRGGNRGRGF), 911–920 (NVGGRGGFGR), and 932–944 (FGRGSGRGFGRGV). Residues 861-1033 (EGGFGGREGG…RRDRAPRVSG (173 aa)) form a disordered region. Basic and acidic residues predominate over residues 945–963 (GRFDNRRGRSRSRSPDLVR). The span at 969–983 (SSYSRSRSRSGSYSR) shows a compositional bias: low complexity. A compositionally biased stretch (basic residues) spans 984-1013 (SRSRSRSWSRSRSRSPRHSRDRGGHNRSRS).

Belongs to the DEAD box helicase family. DDX5/DBP2 subfamily.

The protein resides in the nucleus. The enzyme catalyses ATP + H2O = ADP + phosphate + H(+). Functionally, ATP-dependent RNA helicase involved nonsense-mediated mRNA decay and ribosome biogenesis through rRNA processing. The polypeptide is DEAD-box ATP-dependent RNA helicase 40 (RH40) (Arabidopsis thaliana (Mouse-ear cress)).